The following is a 199-amino-acid chain: Neurotrophic factor BDNF precursor form (199 aa).

The interval Gly1 to Asn23 is disordered. The propeptide occupies Gly1 to Arg100. A compositionally biased stretch (polar residues) spans Thr12 to Asn23. The N-linked (GlcNAc...) asparagine glycan is linked to Asn93. A disulfide bridge connects residues Cys113 and Cys180.

The protein belongs to the NGF-beta family.

The protein resides in the secreted. Promotes the survival of neuronal populations that are all located either in the central nervous system or directly connected to it. The sequence is that of Neurotrophic factor BDNF precursor form (BDNF) from Morelia spilota (Carpet python).